A 365-amino-acid polypeptide reads, in one-letter code: Histidinol-phosphate aminotransferase 2 (365 aa).

K222 is subject to N6-(pyridoxal phosphate)lysine.

This sequence belongs to the class-II pyridoxal-phosphate-dependent aminotransferase family. Histidinol-phosphate aminotransferase subfamily. In terms of assembly, homodimer. The cofactor is pyridoxal 5'-phosphate.

The enzyme catalyses L-histidinol phosphate + 2-oxoglutarate = 3-(imidazol-4-yl)-2-oxopropyl phosphate + L-glutamate. It functions in the pathway amino-acid biosynthesis; L-histidine biosynthesis; L-histidine from 5-phospho-alpha-D-ribose 1-diphosphate: step 7/9. This is Histidinol-phosphate aminotransferase 2 (hisC2) from Bordetella parapertussis (strain 12822 / ATCC BAA-587 / NCTC 13253).